Reading from the N-terminus, the 186-residue chain is Ribosome-recycling factor (186 aa).

It belongs to the RRF family.

The protein localises to the cytoplasm. Responsible for the release of ribosomes from messenger RNA at the termination of protein biosynthesis. May increase the efficiency of translation by recycling ribosomes from one round of translation to another. The sequence is that of Ribosome-recycling factor from Prosthecochloris aestuarii (strain DSM 271 / SK 413).